Consider the following 131-residue polypeptide: Large-conductance mechanosensitive channel (131 aa).

3 helical membrane-spanning segments follow: residues 8–28 (FAMRGNVVDLAVGVIIGGAFG), 30–50 (IVSSLVNDILMPLVGLLLGGV), and 67–87 (GMFIQTVVDFFIISFSIFVFV).

Belongs to the MscL family. Homopentamer.

It is found in the cell membrane. Channel that opens in response to stretch forces in the membrane lipid bilayer. May participate in the regulation of osmotic pressure changes within the cell. This is Large-conductance mechanosensitive channel from Geobacillus sp. (strain WCH70).